A 452-amino-acid chain; its full sequence is MKELKYDVLIIGGGFAGSSAAYQLSRRGLKILLVDSKPWNRIGDKPCGDAVSKAHFDKLGMPYPKGEELENKINGIKLYSPDMQTVWTVNGEGFELNAPLYNQRVLKEAQDRGVEIWDLTTAMKPIFEDGYVKGAVLFNRRTNEELTVYSKVVVEATGYSRSFRSKLPPELPITEDLDDKDADVAYREVLLTKEDIEDHDYLRIFIDQETSPGGYWWYFPKGKNKVNVGLGIQGGMGYPSIHEYYKKYLDKYAPDVDKSKLLVKGGALVPTRRPLYTMAWNGIIVIGDSGFTVNPVHGGGKGSAMISGYCAAKAILSAFETGDFSASGLWDMNICYVNEYGAKQASLDIFRRFLQKLSNDDINYGMKKKIIKEEDLLEASEKGDLHLSVADKAMRVISGLGRPSLLFKLKAVAESMKKIKELYLNYPRSPSSLGSWRREVDNVLTEFNKSLS.

Residues 15-16, 35-36, and 45-50 contribute to the FAD site; these read FA, DS, and KPCGDA. H55 is an a 2,3-bis-O-phytanyl-sn-glycerol 1-phospholipid binding site. The FAD site is built by A122 and D288. Position 297 (H297) interacts with a 2,3-bis-O-phytanyl-sn-glycerol 1-phospholipid. 300 to 301 lines the FAD pocket; it reads GK. Residues C310 and C335 are joined by a disulfide bond. A 2,3-bis-O-phytanyl-sn-glycerol 1-phospholipid is bound at residue Y340.

Belongs to the geranylgeranyl reductase family. As to quaternary structure, monomer. FAD is required as a cofactor.

It catalyses the reaction a 2,3-bis-O-phytanyl-sn-glycerol 1-phospholipid + 8 A = a 2,3-bis-O-(geranylgeranyl)-sn-glycerol 1-phospholipid + 8 AH2. The catalysed reaction is 2,3-bis-O-(phytanyl)-sn-glycerol 1-phosphate + 8 A = 2,3-bis-O-(geranylgeranyl)-sn-glycerol 1-phosphate + 8 AH2. The enzyme catalyses sn-3-O-phytanylglycerol 1-phosphate + 4 A = sn-3-O-(geranylgeranyl)glycerol 1-phosphate + 4 AH2. It carries out the reaction phytyl diphosphate + 3 A = (2E,6E,10E)-geranylgeranyl diphosphate + 3 AH2. It functions in the pathway membrane lipid metabolism; glycerophospholipid metabolism. Functionally, is involved in the reduction of 2,3-digeranylgeranylglycerophospholipids (unsaturated archaeols) into 2,3-diphytanylglycerophospholipids (saturated archaeols) in the biosynthesis of archaeal membrane lipids. Catalyzes the formation of archaetidic acid (2,3-di-O-phytanyl-sn-glyceryl phosphate) from 2,3-di-O-geranylgeranylglyceryl phosphate (DGGGP) via the hydrogenation of each double bond of the isoprenoid chains. Is not active with NADPH or NADH as an electron donor; the physiological reducing agent is unknown. Is also active on the more upstream precursors of membrane lipid biosynthesis, catalyzing the complete reduction of 3-O-geranylgeranylglyceryl phosphate (GGGP) to 3-O-phytanylglyceryl phosphate, and the partial reduction of geranylgeranyl diphosphate (GGPP) to phytyl diphosphate, thus reducing three of four GGPP double bonds and preserving the allylic double bond (at position 2). This reaction product is a reactive prenyl donor, which can be used as a substrate by archaeal prenyltransferases such as GGGP synthases. This chain is Digeranylgeranylglycerophospholipid reductase, found in Sulfolobus acidocaldarius (strain ATCC 33909 / DSM 639 / JCM 8929 / NBRC 15157 / NCIMB 11770).